A 409-amino-acid polypeptide reads, in one-letter code: Dipeptidase 1 (409 aa).

The N-terminal stretch at 1 to 16 (MWTSWWLWPLVAVCAA) is a signal peptide. 2 residues coordinate Zn(2+): H36 and D38. An N-linked (GlcNAc...) asparagine glycan is attached at N57. A disulfide bridge connects residues C87 and C170. E141 is a Zn(2+) binding site. H168 serves as a coordination point for substrate. H214 and H235 together coordinate Zn(2+). C242 and C274 form a disulfide bridge. R246 lines the substrate pocket. A glycan (N-linked (GlcNAc...) asparagine) is linked at N279. D304 is a substrate binding site. S384 carries GPI-anchor amidated serine lipidation. The propeptide at 385–409 (AAPSLHLPPGSLLASLVPLLLLSLP) is removed in mature form.

It belongs to the metallo-dependent hydrolases superfamily. Peptidase M19 family. Homodimer; disulfide-linked. The cofactor is Zn(2+).

The protein localises to the apical cell membrane. The protein resides in the cell projection. Its subcellular location is the microvillus membrane. It localises to the cell membrane. The enzyme catalyses an L-aminoacyl-L-amino acid + H2O = 2 an L-alpha-amino acid. It carries out the reaction leukotriene D4 + H2O = leukotriene E4 + glycine. The catalysed reaction is L-cystine-bis-glycine + 2 H2O = L-cystine + 2 glycine. It catalyses the reaction a beta-lactam + H2O = a substituted beta-amino acid. The enzyme catalyses glycyldehydrophenylalanine + H2O = 2,3-didehydrophenylalanine + glycine. Its activity is regulated as follows. Inhibited by L-penicillamine. Inhibited by cilastatin. Its function is as follows. Hydrolyzes a wide range of dipeptides. Hydrolyzes the conversion of leukotriene D4 to leukotriene E4. Hydrolyzes cystinyl-bis-glycine (cys-bis-gly) formed during glutathione degradation. Also possesses beta lactamase activity and hydrolytically inactivates beta-lactam antibiotics. In terms of biological role, independently of its dipeptidase activity, acts as an adhesion receptor for neutrophil recruitment from bloodstream into inflamed lungs and liver. In Sus scrofa (Pig), this protein is Dipeptidase 1 (DPEP1).